Here is a 129-residue protein sequence, read N- to C-terminus: Follitropin subunit beta (129 aa).

Residues 1–18 form the signal peptide; the sequence is MKSVQFCFLFCCWRAICC. 6 cysteine pairs are disulfide-bonded: Cys-21-Cys-69, Cys-35-Cys-84, Cys-38-Cys-122, Cys-46-Cys-100, Cys-50-Cys-102, and Cys-105-Cys-112. Asn-25 and Asn-42 each carry an N-linked (GlcNAc...) asparagine glycan.

This sequence belongs to the glycoprotein hormones subunit beta family. Heterodimer. The active follitropin is a heterodimer composed of an alpha chain/CGA shared with other hormones and a unique beta chain/FSHB shown here.

It is found in the secreted. Together with the alpha chain CGA constitutes follitropin, the follicle-stimulating hormone, and provides its biological specificity to the hormone heterodimer. Binds FSHR, a G protein-coupled receptor, on target cells to activate downstream signaling pathways. Follitropin is involved in follicle development and spermatogenesis in reproductive organs. The polypeptide is Follitropin subunit beta (FSHB) (Capra hircus (Goat)).